Consider the following 192-residue polypeptide: Crossover junction endodeoxyribonuclease RuvC (192 aa).

Catalysis depends on residues Asp-9, Glu-70, and Asp-143. Asp-9, Glu-70, and Asp-143 together coordinate Mg(2+). The tract at residues 161 to 192 (GASVATTGPGSSSLTPAQRAWAEAEAKARRAR) is disordered. The span at 163–176 (SVATTGPGSSSLTP) shows a compositional bias: polar residues. The span at 182 to 192 (AEAEAKARRAR) shows a compositional bias: basic and acidic residues.

It belongs to the RuvC family. As to quaternary structure, homodimer which binds Holliday junction (HJ) DNA. The HJ becomes 2-fold symmetrical on binding to RuvC with unstacked arms; it has a different conformation from HJ DNA in complex with RuvA. In the full resolvosome a probable DNA-RuvA(4)-RuvB(12)-RuvC(2) complex forms which resolves the HJ. Requires Mg(2+) as cofactor.

Its subcellular location is the cytoplasm. The enzyme catalyses Endonucleolytic cleavage at a junction such as a reciprocal single-stranded crossover between two homologous DNA duplexes (Holliday junction).. In terms of biological role, the RuvA-RuvB-RuvC complex processes Holliday junction (HJ) DNA during genetic recombination and DNA repair. Endonuclease that resolves HJ intermediates. Cleaves cruciform DNA by making single-stranded nicks across the HJ at symmetrical positions within the homologous arms, yielding a 5'-phosphate and a 3'-hydroxyl group; requires a central core of homology in the junction. The consensus cleavage sequence is 5'-(A/T)TT(C/G)-3'. Cleavage occurs on the 3'-side of the TT dinucleotide at the point of strand exchange. HJ branch migration catalyzed by RuvA-RuvB allows RuvC to scan DNA until it finds its consensus sequence, where it cleaves and resolves the cruciform DNA. The protein is Crossover junction endodeoxyribonuclease RuvC of Pseudarthrobacter chlorophenolicus (strain ATCC 700700 / DSM 12829 / CIP 107037 / JCM 12360 / KCTC 9906 / NCIMB 13794 / A6) (Arthrobacter chlorophenolicus).